Reading from the N-terminus, the 90-residue chain is Large ribosomal subunit protein bL27 (90 aa).

The disordered stretch occupies residues 1 to 22 (MAHKKAGGSSRNGRDSESKRLG).

Belongs to the bacterial ribosomal protein bL27 family.

The polypeptide is Large ribosomal subunit protein bL27 (Allorhizobium ampelinum (strain ATCC BAA-846 / DSM 112012 / S4) (Agrobacterium vitis (strain S4))).